Here is a 156-residue protein sequence, read N- to C-terminus: Arginine repressor (156 aa).

This sequence belongs to the ArgR family.

The protein localises to the cytoplasm. The protein operates within amino-acid biosynthesis; L-arginine biosynthesis [regulation]. In terms of biological role, regulates arginine biosynthesis genes. In Vibrio vulnificus (strain CMCP6), this protein is Arginine repressor.